The following is a 244-amino-acid chain: Small ribosomal subunit protein uS3 (244 aa).

A KH type-2 domain is found at 39–107; the sequence is VREMLRKKLA…PAHINVTEVR (69 aa). The interval 213 to 244 is disordered; it reads VGQEKQDDSPRNDRNDRGDRGDRPSRPAREAR. Basic and acidic residues predominate over residues 216–244; sequence EKQDDSPRNDRNDRGDRGDRPSRPAREAR.

This sequence belongs to the universal ribosomal protein uS3 family. Part of the 30S ribosomal subunit. Forms a tight complex with proteins S10 and S14.

Its function is as follows. Binds the lower part of the 30S subunit head. Binds mRNA in the 70S ribosome, positioning it for translation. This is Small ribosomal subunit protein uS3 from Xanthomonas euvesicatoria pv. vesicatoria (strain 85-10) (Xanthomonas campestris pv. vesicatoria).